The following is a 143-amino-acid chain: Hemoglobin subunit alpha-2 (143 aa).

Ser-2 carries the post-translational modification N-acetylserine. Positions Ser-2–Arg-143 constitute a Globin domain. His-60 is a binding site for O2. Position 89 (His-89) interacts with heme b.

This sequence belongs to the globin family. As to quaternary structure, hb 2 is a heterotetramer of two alpha-2 and two beta-1 chains. Hb 3 is a heterotetramer of two alpha-2 and two beta-2 chains. Red blood cells.

Its function is as follows. Involved in oxygen transport from gills to the various peripheral tissues. The polypeptide is Hemoglobin subunit alpha-2 (hba2) (Boreogadus saida (Polar cod)).